Here is a 419-residue protein sequence, read N- to C-terminus: UDP-N-acetylglucosamine 1-carboxyvinyltransferase (419 aa).

A phosphoenolpyruvate-binding site is contributed by 22-23; the sequence is KN. Arg95 contacts UDP-N-acetyl-alpha-D-glucosamine. Cys119 functions as the Proton donor in the catalytic mechanism. Cys119 is subject to 2-(S-cysteinyl)pyruvic acid O-phosphothioketal. Residues 164–167, Asp308, and Ile330 each bind UDP-N-acetyl-alpha-D-glucosamine; that span reads KVSV.

The protein belongs to the EPSP synthase family. MurA subfamily.

It is found in the cytoplasm. The catalysed reaction is phosphoenolpyruvate + UDP-N-acetyl-alpha-D-glucosamine = UDP-N-acetyl-3-O-(1-carboxyvinyl)-alpha-D-glucosamine + phosphate. It functions in the pathway cell wall biogenesis; peptidoglycan biosynthesis. Functionally, cell wall formation. Adds enolpyruvyl to UDP-N-acetylglucosamine. The chain is UDP-N-acetylglucosamine 1-carboxyvinyltransferase from Rickettsia felis (strain ATCC VR-1525 / URRWXCal2) (Rickettsia azadi).